A 661-amino-acid chain; its full sequence is Vasorin (661 aa).

The signal sequence occupies residues 1–19 (MWHLLVWIILLATAQQMIT). The LRRNT domain occupies 20-50 (EGCPAGCQCNTPQTVFCLARKNSNFPRSVPP). Topologically, residues 20–563 (EGCPAGCQCN…VTQSQEGNLT (544 aa)) are extracellular. LRR repeat units lie at residues 52–72 (TLNL…SFIG), 75–96 (GLHL…VFRN), 99–120 (NLSN…TFQG), 123–144 (RLER…AFKG), 147–168 (SLLE…SLPH), 169–189 (LLLL…VFNA), 191–212 (NIES…LLSG), 215–237 (NLHE…HGLT), 238–258 (KLNI…LSNL), and 259–281 (PALQ…LFRS). A glycan (N-linked (GlcNAc...) asparagine) is linked at N99. The region spanning 293–346 (NPFNCVCSLGWLSEWMRVSGVVLLRPDETRCHFPPKNAGKTLRQLRDSEYGCPA) is the LRRCT domain. The segment covering 348 to 385 (TTIQMPSTMPPSTTTGPPTTTKHLQTEAPTTASTTTTT) has biased composition (low complexity). The tract at residues 348 to 395 (TTIQMPSTMPPSTTTGPPTTTKHLQTEAPTTASTTTTTIPHQEQEEDT) is disordered. The region spanning 403–440 (EDTLCPPQTCLNGGSCHLDPTGQLECECPPGFQGTYCE) is the EGF-like domain. 3 cysteine pairs are disulfide-bonded: C407–C418, C412–C428, and C430–C439. The 89-residue stretch at 455-543 (EQVKIIEVTV…EEDLCTETHT (89 aa)) folds into the Fibronectin type-III domain. N-linked (GlcNAc...) asparagine glycans are attached at residues N518 and N561. A helical transmembrane segment spans residues 564-584 (LVLVPAVAAGILLSAAVAAAA). Residues 585–661 (CYARRRKGKG…PTGRLPHSYF (77 aa)) are Cytoplasmic-facing. The tract at residues 591–661 (KGKGHSVEDG…PTGRLPHSYF (71 aa)) is disordered. Over residues 606-623 (DGVKKGLDGKGEVKKLSE) the composition is skewed to basic and acidic residues.

Its subcellular location is the membrane. May act as an inhibitor of TGF-beta signaling. This is Vasorin (vasn) from Xenopus tropicalis (Western clawed frog).